Here is a 328-residue protein sequence, read N- to C-terminus: Methionyl-tRNA formyltransferase (328 aa).

(6S)-5,6,7,8-tetrahydrofolate is bound at residue 110–113 (SLLP).

Belongs to the Fmt family.

The catalysed reaction is L-methionyl-tRNA(fMet) + (6R)-10-formyltetrahydrofolate = N-formyl-L-methionyl-tRNA(fMet) + (6S)-5,6,7,8-tetrahydrofolate + H(+). Attaches a formyl group to the free amino group of methionyl-tRNA(fMet). The formyl group appears to play a dual role in the initiator identity of N-formylmethionyl-tRNA by promoting its recognition by IF2 and preventing the misappropriation of this tRNA by the elongation apparatus. This chain is Methionyl-tRNA formyltransferase, found in Prochlorococcus marinus subsp. pastoris (strain CCMP1986 / NIES-2087 / MED4).